An 856-amino-acid polypeptide reads, in one-letter code: DNA mismatch repair protein MutS (856 aa).

617 to 624 (GPNMGGKS) is an ATP binding site.

Belongs to the DNA mismatch repair MutS family.

Its function is as follows. This protein is involved in the repair of mismatches in DNA. It is possible that it carries out the mismatch recognition step. This protein has a weak ATPase activity. The sequence is that of DNA mismatch repair protein MutS from Psychromonas ingrahamii (strain DSM 17664 / CCUG 51855 / 37).